Reading from the N-terminus, the 1429-residue chain is Autophagy-related protein 11 (1429 aa).

4 coiled-coil regions span residues 540 to 579 (GDDD…QSQA), 616 to 808 (EGID…LDDH), 842 to 985 (TLVE…HMNS), and 1106 to 1135 (RRIK…LQKD). Residues 574 to 622 (HRQSQASRPGNLFQPQGSQQRERVNSASSVRSSRFDDRRRSSEGIDPLM) form a disordered region. Polar residues predominate over residues 575 to 592 (RQSQASRPGNLFQPQGSQ). A compositionally biased stretch (basic and acidic residues) spans 606–616 (SRFDDRRRSSE). Disordered stretches follow at residues 1205–1224 (SKSL…ENDN) and 1333–1405 (RAHN…PTRR). Polar residues-rich tracts occupy residues 1206-1215 (KSLQPSSETE) and 1333-1362 (RAHN…GQKN). Residues 1384 to 1398 (KADEQPRSVVQREDS) show a composition bias toward basic and acidic residues.

This sequence belongs to the ATG11 family. In terms of assembly, homodimer and potential homooligomers. Interacts with ATG1 kinase and the ATG19 and ATG34 cargo protein transporters. Interacts with ATG9, ATG17 and ATG20.

The protein resides in the preautophagosomal structure membrane. The protein localises to the vacuole membrane. In terms of biological role, involved in cytoplasm to vacuole transport (Cvt), pexophagy, mitophagy and nucleophagy. Recruits mitochondria for their selective degradation via autophagy (mitophagy) during starvation, through its interaction with ATG32. Works as scaffold proteins that recruit ATG proteins to the pre-autophagosome (PAS), the site of vesicle/autophagosome formation. Required for ATG9 anterograde transport from the mitochondria to the PAS. Also recruits the ATG19-prAPE1 complex to the PAS. Required for the Cvt vesicles completion. Autophagy is required for proper vegetative growth, asexual/sexual reproduction, and full virulence. Autophagy is particularly involved in the biosynthesis of deoxynivalenol (DON), an important virulence determinant. The protein is Autophagy-related protein 11 of Gibberella zeae (strain ATCC MYA-4620 / CBS 123657 / FGSC 9075 / NRRL 31084 / PH-1) (Wheat head blight fungus).